The sequence spans 809 residues: Ribosome biogenesis protein ERB1 (809 aa).

The segment at 1–107 is disordered; sequence MSKSSKVGMT…SDTRSITDAI (107 aa). Acidic residues-rich tracts occupy residues 30-70 and 77-97; these read AEVD…EDSD and LGEEEDPSDYDSENFSDEPQE. A required for interaction with NOP7 region spans residues 267–383; sequence RFVPSKHEAK…LRKVPGYQES (117 aa). Residues 383 to 419 are required for interaction with YTM1; the sequence is SVRERFERCLDLYLAPRVRHNKLNIDPESLIPELPSP. WD repeat units lie at residues 435–474 and 483–523; these read GHTDKIRTISIDPQGLWLATGSDDGSVRIWEILTGRQVFN and NDED…FDIE. Residues 545–569 form a disordered region; sequence EEKFKNDEGNEDEDDEDDSATSTAV. Positions 553–563 are enriched in acidic residues; sequence GNEDEDDEDDS. WD repeat units follow at residues 593-635, 638-676, 679-718, 722-762, and 778-809; these read QCRK…SQSP, KSKGIIMDAKFHPFKPQLFVASQRQVRIYDLAQQVLVKK, PGVRLLSTIDIHPRGDNLLASSYDKRVLWHDLDLSATPYK, YHEK…DLMT, and VNSIGILDLIWHPKEAWLFSAGADGTARLWTT.

Belongs to the WD repeat BOP1/ERB1 family. In terms of assembly, component of the NOP7 complex, composed of ERB1, NOP7 and YTM1. The complex is held together by ERB1, which interacts with NOP7 via its N-terminal domain and with YTM1 via a high-affinity interaction between the seven-bladed beta-propeller domains of the 2 proteins. The NOP7 complex associates with the 66S pre-ribosome.

Its subcellular location is the nucleus. It localises to the nucleolus. The protein resides in the nucleoplasm. Its function is as follows. Component of the NOP7 complex, which is required for maturation of the 25S and 5.8S ribosomal RNAs and formation of the 60S ribosome. The chain is Ribosome biogenesis protein ERB1 from Scheffersomyces stipitis (strain ATCC 58785 / CBS 6054 / NBRC 10063 / NRRL Y-11545) (Yeast).